A 168-amino-acid polypeptide reads, in one-letter code: MESIVLIGFMGAGKTTIGQSLANKLKMPHLDLDTALIEKIGRSIPDYFEKYGEAAFREQETQLLKELSKNTAVLSTGGGIVVGPENRSLLKSFQQVIYLHATPEELLKRITEDTENQRPLAIERSSKEIITLFESRKNFYEECAKMTIDTTNRSPEEIINEILQQLKE.

11-16 contacts ATP; it reads GAGKTT. Mg(2+) is bound at residue Thr-15. Residues Asp-33, Arg-57, and Gly-78 each coordinate substrate. An ATP-binding site is contributed by Arg-118. Arg-136 contributes to the substrate binding site. Arg-153 lines the ATP pocket.

Belongs to the shikimate kinase family. As to quaternary structure, monomer. The cofactor is Mg(2+).

It localises to the cytoplasm. The catalysed reaction is shikimate + ATP = 3-phosphoshikimate + ADP + H(+). It participates in metabolic intermediate biosynthesis; chorismate biosynthesis; chorismate from D-erythrose 4-phosphate and phosphoenolpyruvate: step 5/7. Functionally, catalyzes the specific phosphorylation of the 3-hydroxyl group of shikimic acid using ATP as a cosubstrate. The sequence is that of Shikimate kinase from Enterococcus faecalis (strain ATCC 700802 / V583).